The primary structure comprises 423 residues: Gamma-glutamyl phosphate reductase (423 aa).

Belongs to the gamma-glutamyl phosphate reductase family.

The protein localises to the cytoplasm. It carries out the reaction L-glutamate 5-semialdehyde + phosphate + NADP(+) = L-glutamyl 5-phosphate + NADPH + H(+). The protein operates within amino-acid biosynthesis; L-proline biosynthesis; L-glutamate 5-semialdehyde from L-glutamate: step 2/2. Its function is as follows. Catalyzes the NADPH-dependent reduction of L-glutamate 5-phosphate into L-glutamate 5-semialdehyde and phosphate. The product spontaneously undergoes cyclization to form 1-pyrroline-5-carboxylate. The protein is Gamma-glutamyl phosphate reductase of Pseudomonas entomophila (strain L48).